Consider the following 260-residue polypeptide: 5-oxoprolinase subunit A 2 (260 aa).

This sequence belongs to the LamB/PxpA family. In terms of assembly, forms a complex composed of PxpA, PxpB and PxpC.

The catalysed reaction is 5-oxo-L-proline + ATP + 2 H2O = L-glutamate + ADP + phosphate + H(+). Catalyzes the cleavage of 5-oxoproline to form L-glutamate coupled to the hydrolysis of ATP to ADP and inorganic phosphate. This Ralstonia nicotianae (strain ATCC BAA-1114 / GMI1000) (Ralstonia solanacearum) protein is 5-oxoprolinase subunit A 2.